Here is a 147-residue protein sequence, read N- to C-terminus: 3-dehydroquinate dehydratase (147 aa).

Residue Y23 is the Proton acceptor of the active site. The substrate site is built by N74, H80, and D87. The Proton donor role is filled by H100. Substrate is bound by residues 101-102 (IS) and R111.

This sequence belongs to the type-II 3-dehydroquinase family. Homododecamer.

It carries out the reaction 3-dehydroquinate = 3-dehydroshikimate + H2O. The protein operates within metabolic intermediate biosynthesis; chorismate biosynthesis; chorismate from D-erythrose 4-phosphate and phosphoenolpyruvate: step 3/7. Catalyzes a trans-dehydration via an enolate intermediate. The polypeptide is 3-dehydroquinate dehydratase (Prochlorococcus marinus (strain MIT 9215)).